The primary structure comprises 1072 residues: Serine/threonine-protein kinase 11-interacting protein (1072 aa).

LRR repeat units lie at residues 109–130, 132–152, 164–185, 187–209, 210–231, 233–254, 255–276, and 280–301; these read SLRQ…RGIY, QLES…LSAC, ALLS…LRLL, ALRF…MDLC, ELYH…GPSG, ALGT…EQLK, NLRH…APLW, and ELRK…RAAT. Residues 333-366 form a disordered region; it reads DSSGLGPVIQPLSWPVGSTTETSGGPELSDSLSS. 3 positions are modified to phosphoserine: S388, S390, and S393. Residues 441–454 show a composition bias toward polar residues; that stretch reads MGSSPLSTTKTPAL. Disordered regions lie at residues 441–522 and 741–762; these read MGSS…EQKA and RPDG…SLSP. Basic and acidic residues-rich tracts occupy residues 478 to 492 and 501 to 510; these read KESP…RVEP and EQDKEEGSRE. 3 positions are modified to phosphoserine: S757, S761, and S763. Positions 967 to 993 are disordered; that stretch reads HAESPLPVVSDETSEQPASLGPGPSLQ.

This sequence belongs to the STK11IP family. In terms of assembly, found in a ternary complex composed of STK11/LKB1, STK11IP and SMAD4. Interacts with SMAD4. Interacts with STK11/LKB1.

Its subcellular location is the cytoplasm. Functionally, may regulate STK11/LKB1 function by controlling its subcellular localization. The protein is Serine/threonine-protein kinase 11-interacting protein (Stk11ip) of Mus musculus (Mouse).